The chain runs to 933 residues: Clumping factor A (933 aa).

Residues 1-39 (MNMKKKEKHAIRKKSIGVASVLVGTLIGFGLLSSKEADA) form the signal peptide. The YSIRK-G/S signaling motif signature appears at 9–20 (HAIRKKSIGVAS). 2 disordered regions span residues 34-200 (SKEA…SNKD) and 529-904 (FNNG…SEDE). The interval 40–542 (SENSVTQSDS…SGSGDGIDKP (503 aa)) is ligand binding A region. The span at 47 to 65 (SDSASNESKSNDSSSVSAA) shows a compositional bias: low complexity. Polar residues predominate over residues 71–105 (TNVSDTKTSSNTNNGETSVAQNPAQQETTQSSSTN). 2 stretches are compositionally biased toward low complexity: residues 106–132 (ATTEETPVTGEATTTTTNQANTPATTQ) and 143–162 (NQTSNETTSNDTNTVSSVNS). Residues 163 to 200 (PQNSTNAENVSTTQDTSTEATPSNNESAPQSTDASNKD) are compositionally biased toward polar residues. The span at 547–565 (QPDEPGEIEPIPEDSDSDP) shows a compositional bias: acidic residues. Over residues 566 to 598 (GSDSGSDSNSDSGSDSGSDSTSDSGSDSASDSD) the composition is skewed to low complexity. Over residues 599-861 (SASDSDSASD…DSDSESDSNS (263 aa)) the composition is skewed to acidic residues. Residues 862-880 (DSESGSNNNVVPPNSPKNG) show a composition bias toward low complexity. Basic and acidic residues predominate over residues 887 to 896 (NEAKDSKEPL). Positions 896–900 (LPDTG) match the LPXTG sorting signal motif. Thr-899 carries the pentaglycyl murein peptidoglycan amidated threonine modification. Residues 900-933 (GSEDEANTSLIWGLLASIGSLLLFRRKKENKDKK) constitute a propeptide, removed by sortase.

It belongs to the serine-aspartate repeat-containing protein (SDr) family.

The protein resides in the secreted. It is found in the cell wall. Cell surface-associated protein implicated in virulence. Promotes bacterial attachment exclusively to the gamma-chain of human fibrinogen. Induces formation of bacterial clumps. The protein is Clumping factor A (clfA) of Staphylococcus aureus (strain COL).